A 149-amino-acid polypeptide reads, in one-letter code: D-aminoacyl-tRNA deacylase (149 aa).

Residues 137 to 138 carry the Gly-cisPro motif, important for rejection of L-amino acids motif; that stretch reads GP.

Belongs to the DTD family. In terms of assembly, homodimer.

The protein localises to the cytoplasm. It carries out the reaction glycyl-tRNA(Ala) + H2O = tRNA(Ala) + glycine + H(+). The enzyme catalyses a D-aminoacyl-tRNA + H2O = a tRNA + a D-alpha-amino acid + H(+). Its function is as follows. An aminoacyl-tRNA editing enzyme that deacylates mischarged D-aminoacyl-tRNAs. Also deacylates mischarged glycyl-tRNA(Ala), protecting cells against glycine mischarging by AlaRS. Acts via tRNA-based rather than protein-based catalysis; rejects L-amino acids rather than detecting D-amino acids in the active site. By recycling D-aminoacyl-tRNA to D-amino acids and free tRNA molecules, this enzyme counteracts the toxicity associated with the formation of D-aminoacyl-tRNA entities in vivo and helps enforce protein L-homochirality. The polypeptide is D-aminoacyl-tRNA deacylase (Geobacter sp. (strain M21)).